Reading from the N-terminus, the 349-residue chain is MSKETLILLYGGRSAEREVSVLSAESVMRAVNYSRFVVKTYFITKGGEFIKTQEFTDKPAEEEKLLTNDLAESYPKISPAAIYEKAAVVFPVLHGPMGEDGSIQGFLEILRLAYVGPNILSASSTMDKLLAKHVFEAVGVPQVPYVAAFADENQGEIAQEVVEKLEFPVFVKPANMGSSVGISKVDDLADLQPALSEAYKYDNRVVIEQGVDAREIECAVLGNNSDVSATLPGEVVKDVEFYDYNSKYIDNKIQMDIPAKVPADLAQKMQEYAIKAYKAVNGTGLSRCDFFVTKDGNVYLNEINAIPGFTQWSMYPLLWENMGLSYSDLIEKLVDLAKETFETRENHLL.

Positions 132–335 constitute an ATP-grasp domain; that stretch reads KHVFEAVGVP…YSDLIEKLVD (204 aa). An ATP-binding site is contributed by 162 to 217; the sequence is VEKLEFPVFVKPANMGSSVGISKVDDLADLQPALSEAYKYDNRVVIEQGVDAREIE. The Mg(2+) site is built by Asp-289, Glu-302, and Asn-304.

The protein belongs to the D-alanine--D-alanine ligase family. Mg(2+) serves as cofactor. The cofactor is Mn(2+).

It is found in the cytoplasm. The enzyme catalyses 2 D-alanine + ATP = D-alanyl-D-alanine + ADP + phosphate + H(+). It functions in the pathway cell wall biogenesis; peptidoglycan biosynthesis. In terms of biological role, cell wall formation. The protein is D-alanine--D-alanine ligase of Lactococcus lactis subsp. lactis (strain IL1403) (Streptococcus lactis).